The sequence spans 398 residues: NADH-quinone oxidoreductase subunit D (398 aa).

Belongs to the complex I 49 kDa subunit family. As to quaternary structure, NDH-1 is composed of 14 different subunits. Subunits NuoB, C, D, E, F, and G constitute the peripheral sector of the complex.

The protein resides in the cell inner membrane. It carries out the reaction a quinone + NADH + 5 H(+)(in) = a quinol + NAD(+) + 4 H(+)(out). NDH-1 shuttles electrons from NADH, via FMN and iron-sulfur (Fe-S) centers, to quinones in the respiratory chain. The immediate electron acceptor for the enzyme in this species is believed to be ubiquinone. Couples the redox reaction to proton translocation (for every two electrons transferred, four hydrogen ions are translocated across the cytoplasmic membrane), and thus conserves the redox energy in a proton gradient. This chain is NADH-quinone oxidoreductase subunit D, found in Bradyrhizobium diazoefficiens (strain JCM 10833 / BCRC 13528 / IAM 13628 / NBRC 14792 / USDA 110).